Here is an 86-residue protein sequence, read N- to C-terminus: Exodeoxyribonuclease 7 small subunit (86 aa).

It belongs to the XseB family. In terms of assembly, heterooligomer composed of large and small subunits.

The protein localises to the cytoplasm. The catalysed reaction is Exonucleolytic cleavage in either 5'- to 3'- or 3'- to 5'-direction to yield nucleoside 5'-phosphates.. In terms of biological role, bidirectionally degrades single-stranded DNA into large acid-insoluble oligonucleotides, which are then degraded further into small acid-soluble oligonucleotides. The chain is Exodeoxyribonuclease 7 small subunit from Xanthomonas euvesicatoria pv. vesicatoria (strain 85-10) (Xanthomonas campestris pv. vesicatoria).